A 1458-amino-acid polypeptide reads, in one-letter code: Probable serine/threonine-protein kinase yakA (1458 aa).

A compositionally biased stretch (low complexity) spans 32–76 (NNSLNSNDNTNTTNNNNNNNNNNNNNNNNNNNNNNNNNINNNNNN). A disordered region spans residues 32 to 83 (NNSLNSNDNTNTTNNNNNNNNNNNNNNNNNNNNNNNNNINNNNNNGGMVGVN). One can recognise a Protein kinase domain in the interval 205 to 548 (YKVLDSLGQG…PMQAKEHPFI (344 aa)). Residues 211 to 219 (LGQGTFGQV) and Lys234 each bind ATP. The active-site Proton acceptor is the Asp332. 2 disordered regions span residues 441-462 (HRHL…NGKP) and 545-571 (HPFI…TYSQ). Over residues 446 to 459 (SNSDDNNNNNNNNN) the composition is skewed to low complexity. Residues 588-643 (NQHQLFQQLQQQQQQQQQQQQQQQQQQQQQQQQQQQQQQHNQFQQQQQQQQQQQQS) are a coiled coil. Low complexity-rich tracts occupy residues 659 to 709 (TPYT…SFNF), 791 to 800 (SWGSDSSSIS), 808 to 853 (QKQM…NNVN), and 861 to 870 (DIPSDSFSSS). 2 disordered regions span residues 659-714 (TPYT…NESF) and 791-874 (SWGS…EGMD). Positions 878–927 (NLYQQQQQQQQQQQQQQQQQQQQQQQQQQQQQQQQQQLQYQQQFQTLQDL) form a coiled coil. 5 disordered regions span residues 930 to 1095 (EGEK…PQMI), 1128 to 1161 (NQQN…GGAI), 1233 to 1347 (DYRP…SYQY), 1375 to 1399 (QQQQ…KTSS), and 1435 to 1458 (QQLQ…YRET). Low complexity-rich tracts occupy residues 961–988 (QQTN…QQQQ), 1016–1042 (QQFQ…RFMQ), and 1064–1093 (QPLH…FTPQ). Composition is skewed to polar residues over residues 1128–1158 (NQQN…NSSG) and 1233–1245 (DYRP…QSPP). 2 stretches are compositionally biased toward low complexity: residues 1246 to 1255 (SSYNSNKSFY) and 1264 to 1279 (NNNN…NFSN). The segment covering 1280–1291 (SLLPSQQQNVIF) has biased composition (polar residues). The span at 1292–1309 (PQNSPPSSYNSSNSLSKS) shows a compositional bias: low complexity. Composition is skewed to polar residues over residues 1310–1321 (GGNTVKNNSNTG) and 1331–1344 (QRFN…SGGS). Coiled-coil stretches lie at residues 1346–1383 (QYQQ…KKDT) and 1409–1442 (RYQY…QQQA).

This sequence belongs to the protein kinase superfamily. CMGC Ser/Thr protein kinase family. MNB/DYRK subfamily.

It is found in the cytoplasm. The catalysed reaction is L-seryl-[protein] + ATP = O-phospho-L-seryl-[protein] + ADP + H(+). The enzyme catalyses L-threonyl-[protein] + ATP = O-phospho-L-threonyl-[protein] + ADP + H(+). It carries out the reaction L-tyrosyl-[protein] + ATP = O-phospho-L-tyrosyl-[protein] + ADP + H(+). Functionally, general sensor of environmental conditions, such as heat stress, effecting changes through pkaC. Essential for survival to nitrosoative and oxidative stresses. Required for cell cycle control, not only at the onset but also during development (aggregation process and postaggregative development). This chain is Probable serine/threonine-protein kinase yakA (yakA), found in Dictyostelium discoideum (Social amoeba).